A 290-amino-acid polypeptide reads, in one-letter code: MNVIRARTAGFCMGVSLALRKLDREVDRAEEKAAQGSPRCRIATFGPIIHNPQVLEAYAGMGVRCLRQVDEVEAGDHVVIRAHGVPQQQEKALRSRDAVVVDATCPKVKKAQLGIEEQCRAGRTLLLFGEAEHPEVRGLLSYAGEGALVFGSVDELEGLPLQPETEYFLAAQTTQDRVAFEAARAWLHERLGHEVPVLETICDATRLRQQEAIDIARKVDAMVVVGGFDSGNTRRLADVAAAQGVFTVHVENESQLPVEQLRGCGIIGLTAGASTPKSIIDATQRFLESL.

A [4Fe-4S] cluster-binding site is contributed by cysteine 12. 2 residues coordinate (2E)-4-hydroxy-3-methylbut-2-enyl diphosphate: histidine 50 and histidine 83. Residues histidine 50 and histidine 83 each contribute to the dimethylallyl diphosphate site. Residues histidine 50 and histidine 83 each coordinate isopentenyl diphosphate. Cysteine 105 contributes to the [4Fe-4S] cluster binding site. Histidine 133 is a (2E)-4-hydroxy-3-methylbut-2-enyl diphosphate binding site. Residue histidine 133 participates in dimethylallyl diphosphate binding. Histidine 133 provides a ligand contact to isopentenyl diphosphate. Catalysis depends on glutamate 135, which acts as the Proton donor. Position 173 (threonine 173) interacts with (2E)-4-hydroxy-3-methylbut-2-enyl diphosphate. Cysteine 202 serves as a coordination point for [4Fe-4S] cluster. Residues serine 230, asparagine 232, and serine 274 each coordinate (2E)-4-hydroxy-3-methylbut-2-enyl diphosphate. Dimethylallyl diphosphate is bound by residues serine 230, asparagine 232, and serine 274. Residues serine 230, asparagine 232, and serine 274 each contribute to the isopentenyl diphosphate site.

Belongs to the IspH family. [4Fe-4S] cluster serves as cofactor.

It catalyses the reaction isopentenyl diphosphate + 2 oxidized [2Fe-2S]-[ferredoxin] + H2O = (2E)-4-hydroxy-3-methylbut-2-enyl diphosphate + 2 reduced [2Fe-2S]-[ferredoxin] + 2 H(+). The catalysed reaction is dimethylallyl diphosphate + 2 oxidized [2Fe-2S]-[ferredoxin] + H2O = (2E)-4-hydroxy-3-methylbut-2-enyl diphosphate + 2 reduced [2Fe-2S]-[ferredoxin] + 2 H(+). It functions in the pathway isoprenoid biosynthesis; dimethylallyl diphosphate biosynthesis; dimethylallyl diphosphate from (2E)-4-hydroxy-3-methylbutenyl diphosphate: step 1/1. The protein operates within isoprenoid biosynthesis; isopentenyl diphosphate biosynthesis via DXP pathway; isopentenyl diphosphate from 1-deoxy-D-xylulose 5-phosphate: step 6/6. Catalyzes the conversion of 1-hydroxy-2-methyl-2-(E)-butenyl 4-diphosphate (HMBPP) into a mixture of isopentenyl diphosphate (IPP) and dimethylallyl diphosphate (DMAPP). Acts in the terminal step of the DOXP/MEP pathway for isoprenoid precursor biosynthesis. This Nitratidesulfovibrio vulgaris (strain DP4) (Desulfovibrio vulgaris) protein is 4-hydroxy-3-methylbut-2-enyl diphosphate reductase.